Reading from the N-terminus, the 788-residue chain is Cadherin-10 (788 aa).

The signal sequence occupies residues 1–22; that stretch reads MTIHQFLLLFLFWVCLPHFCSP. A propeptide spanning residues 23-54 is cleaved from the precursor; sequence EIMFRRTPVPQQRILSSRVPRSDGKILHRQKR. 5 Cadherin domains span residues 55–160, 161–269, 270–384, 385–487, and 488–606; these read GWMW…EPTF, PEEI…PPRF, PQNT…PPVF, SRSS…DNAP, and QFAV…LLLP. Residues 55-613 lie on the Extracellular side of the membrane; the sequence is GWMWNQFFLL…LLPAGLSTGA (559 aa). N-linked (GlcNAc...) asparagine glycosylation occurs at Asn256. Residues Asn438, Asn456, and Asn534 are each glycosylated (N-linked (GlcNAc...) asparagine). Residues 614-634 form a helical membrane-spanning segment; the sequence is LIAILLCIIILLVIVVLFAAL. At 635–788 the chain is on the cytoplasmic side; that stretch reads KRQRKKEPLI…YGGGESDKDS (154 aa). Ser784 and Ser788 each carry phosphoserine.

In terms of tissue distribution, predominantly expressed in brain. Also found in adult and fetal kidney. Very low levels detected in prostate and fetal lung.

It is found in the cell membrane. In terms of biological role, cadherins are calcium-dependent cell adhesion proteins. They preferentially interact with themselves in a homophilic manner in connecting cells; cadherins may thus contribute to the sorting of heterogeneous cell types. The sequence is that of Cadherin-10 (CDH10) from Homo sapiens (Human).